The sequence spans 339 residues: MKLVDRFRGAVTGMPRRLMVGAVGAALLSGLVGFVGGSATASAFSRPGLPVEYLQVPSAAMGRNIKIQFQSGGANSPALYLLDGMRAQDDYNGWDINTPAFEWYNQSGISVVMPVGGQSSFYSDWYNPACGKAGCTTYKWETFLTSELPAYLASNKQVKPTGSAAVGLSMAGSSALILAAYHPDQFVYAGSLSALLDPSQAMGPSLIGLAMGDAGGYKASDMWGPRGPAWQRNDPSLQVGKLVANNSRLWIYCGDGKPSDLGGNNLPAKFLEGFVRTSNLKFQEAYNGAGGHNAVFNFDANGTHDWPYWGAPVQAMKGDLQSTLGATPGAGPATAAASA.

An N-terminal signal peptide occupies residues 1–43 (MKLVDRFRGAVTGMPRRLMVGAVGAALLSGLVGFVGGSATASA). Substrate is bound at residue 85–86 (MR). The tract at residues 101–111 (FEWYNQSGISV) is fibronectin-binding. A disulfide bridge links C130 with C135. Substrate-binding residues include S169 and D197. Catalysis depends on S169, which acts as the Nucleophile. The active site involves E272. Residues 274 to 277 (FVRT), K281, and 304 to 306 (HDW) contribute to the substrate site. The active site involves H304.

The protein belongs to the mycobacterial A85 antigen family. Homodimer.

It localises to the secreted. Its subcellular location is the cell wall. The protein resides in the cytoplasm. It catalyses the reaction an acyl-CoA + a 1,2-diacyl-sn-glycerol = a triacyl-sn-glycerol + CoA. The catalysed reaction is 2 alpha,alpha'-trehalose 6-mycolate = alpha,alpha'-trehalose 6,6'-bismycolate + alpha,alpha-trehalose. In terms of biological role, the antigen 85 proteins (FbpA, FbpB, FbpC) are responsible for the high affinity of mycobacteria for fibronectin, a large adhesive glycoprotein, which facilitates the attachment of M.tuberculosis to murine alveolar macrophages (AMs). They also help to maintain the integrity of the cell wall by catalyzing the transfer of mycolic acids to cell wall arabinogalactan, and through the synthesis of alpha,alpha-trehalose dimycolate (TDM, cord factor). They catalyze the transfer of a mycoloyl residue from one molecule of alpha,alpha-trehalose monomycolate (TMM) to another TMM, leading to the formation of TDM. FbpA mediates triacylglycerol (TAG) formation with long-chain acyl-CoA as the acyl donor and 1,2-dipalmitoyl-sn-glycerol (1,2-dipalmitin) as the acyl acceptor. It has a preference for C26:0-CoA over C18:1-CoA. The polypeptide is Diacylglycerol acyltransferase/mycolyltransferase Ag85A (fbpA) (Mycobacterium gordonae).